The sequence spans 90 residues: Small ribosomal subunit protein bS20 (90 aa).

Belongs to the bacterial ribosomal protein bS20 family.

Binds directly to 16S ribosomal RNA. This chain is Small ribosomal subunit protein bS20, found in Mesomycoplasma hyopneumoniae (strain J / ATCC 25934 / NCTC 10110) (Mycoplasma hyopneumoniae).